Here is an 826-residue protein sequence, read N- to C-terminus: Eukaryotic translation initiation factor 3 subunit C (826 aa).

2 disordered regions span residues 1 to 71 (MSRF…GKGA) and 205 to 227 (SGGD…PRAK). Acidic residues predominate over residues 10-20 (DSDDSSSDEDL). Over residues 21-30 (YGSGSESGSD) the composition is skewed to low complexity. Over residues 32-65 (SQDEQDGGDDNDDDMSDDSMFADDSDDDSDDDED) the composition is skewed to acidic residues. Basic and acidic residues predominate over residues 218 to 227 (KEDKPKPRAK). The region spanning 605-779 (FHTHINLELL…NSVVFTQAVQ (175 aa)) is the PCI domain.

It belongs to the eIF-3 subunit C family. Component of the eukaryotic translation initiation factor 3 (eIF-3) complex.

Its subcellular location is the cytoplasm. In terms of biological role, component of the eukaryotic translation initiation factor 3 (eIF-3) complex, which is involved in protein synthesis of a specialized repertoire of mRNAs and, together with other initiation factors, stimulates binding of mRNA and methionyl-tRNAi to the 40S ribosome. The eIF-3 complex specifically targets and initiates translation of a subset of mRNAs involved in cell proliferation. In Yarrowia lipolytica (strain CLIB 122 / E 150) (Yeast), this protein is Eukaryotic translation initiation factor 3 subunit C.